The chain runs to 334 residues: GTP 3',8-cyclase (334 aa).

A Radical SAM core domain is found at 13–239 (RFQRKFYYLR…KARADNDGPA (227 aa)). Arginine 22 lines the GTP pocket. [4Fe-4S] cluster contacts are provided by cysteine 29 and cysteine 33. Tyrosine 35 serves as a coordination point for S-adenosyl-L-methionine. Residue cysteine 36 participates in [4Fe-4S] cluster binding. Arginine 73 lines the GTP pocket. Glycine 77 contacts S-adenosyl-L-methionine. Threonine 104 is a binding site for GTP. Residue serine 128 coordinates S-adenosyl-L-methionine. Lysine 165 provides a ligand contact to GTP. Methionine 199 contacts S-adenosyl-L-methionine. Residues cysteine 262 and cysteine 265 each coordinate [4Fe-4S] cluster. 267-269 (RLR) lines the GTP pocket. Residue cysteine 279 coordinates [4Fe-4S] cluster.

The protein belongs to the radical SAM superfamily. MoaA family. As to quaternary structure, monomer and homodimer. [4Fe-4S] cluster serves as cofactor.

The catalysed reaction is GTP + AH2 + S-adenosyl-L-methionine = (8S)-3',8-cyclo-7,8-dihydroguanosine 5'-triphosphate + 5'-deoxyadenosine + L-methionine + A + H(+). It functions in the pathway cofactor biosynthesis; molybdopterin biosynthesis. Functionally, catalyzes the cyclization of GTP to (8S)-3',8-cyclo-7,8-dihydroguanosine 5'-triphosphate. In Vibrio cholerae serotype O1 (strain M66-2), this protein is GTP 3',8-cyclase.